Reading from the N-terminus, the 285-residue chain is Transmembrane protein 53-A (285 aa).

Residues 165–185 (FLALAAFAILVIILRILLYPL) traverse the membrane as a helical segment.

Belongs to the TMEM53 family.

The protein resides in the nucleus outer membrane. In terms of biological role, ensures normal bone formation, through the negative regulation of bone morphogenetic protein (BMP) signaling in osteoblast lineage cells by blocking cytoplasm-nucleus translocation of phosphorylated SMAD proteins. The sequence is that of Transmembrane protein 53-A (tmem53-a) from Xenopus laevis (African clawed frog).